The sequence spans 764 residues: Ergosteryl-beta-glucosidase (764 aa).

Glu-515 (nucleophile) is an active-site residue. Residues 588 to 629 are disordered; sequence HDTRAKTPTPEPSPASTVASVSTSTSKSGSSQPPSFIKPDNH. Residue Thr-594 is modified to Phosphothreonine. Over residues 601 to 622 the composition is skewed to low complexity; that stretch reads PASTVASVSTSTSKSGSSQPPS.

It belongs to the glycosyl hydrolase 5 (cellulase A) family.

The protein localises to the cytoplasm. The protein resides in the cytosol. Its subcellular location is the vacuole membrane. It carries out the reaction ergosteryl 3-beta-D-glucoside + H2O = ergosterol + D-glucose. Functionally, ergosteryl beta-glucosidase involved in the ergosteryl beta-glucoside (EG) catabolic pathway and vacuole formation via hydrolysis of EG to generate glucose. Is also able to hydrolyze cholesteryl beta-glucoside and sitosteryl beta-glucoside to generate glucose; and C6-7-nitro-2,1,3-benzoxadiazole (NBD)-GlcCer to generate C6-NBD-ceramide (Cer). This is Ergosteryl-beta-glucosidase from Saccharomyces cerevisiae (strain ATCC 204508 / S288c) (Baker's yeast).